Here is a 425-residue protein sequence, read N- to C-terminus: Alpha/beta hydrolase xenA (425 aa).

The active site involves aspartate 366.

This sequence belongs to the AB hydrolase superfamily. FUS2 hydrolase family. As to quaternary structure, homodimer.

It functions in the pathway mycotoxin biosynthesis. In terms of biological role, alpha/beta hydrolase; part of the gene cluster that mediates the biosynthesis of xenoacremones such as xenoacremone A, a compound that shows inhibitory activity toward the PI3K/AKT signaling pathway and which has the ability to induce apoptosis of A549 lung cancer cells. Within the pathway, cooperation of the hybrid PKS-NRPS xenE and the trans-acting enoyl reductase xenG is responsible for the formation of the reduced tyrosine-nonaketide derivative. The alpha/beta hydrolase xenA then accelerates intramolecular nucleophilic attack to give a pyrrolidone derivative. Subsequently, three enzymes, xenF, xenD, and xenC, coordinately participate in the conversion to xenoacremone B. XenF catalyzes sigmatropic rearrangement to form an A-ring, which leads to an unusual intermediate with a hexane ring, which is required for the formation of the tricarbocyclic product. Epoxidation catalyzed by xenD and the formation of the paracyclophane ether catalyzed by xenC initiate a spontaneous intramolecular Diels-Alder (IMDA) reaction to yield xenoacremone B. Spontaneous hydration of xenoacremone B leads to the formation of xenoacremone A, which undergoes subsequent methylation to afford xenoacremone C. This chain is Alpha/beta hydrolase xenA, found in Xenoacremonium sinensis (Endophyte fungus).